The sequence spans 212 residues: Uracil phosphoribosyltransferase (212 aa).

Residues R78, R103, and 130 to 138 (DPMLATGGS) contribute to the 5-phospho-alpha-D-ribose 1-diphosphate site. Residues I193 and 198 to 200 (GDA) contribute to the uracil site. D199 contacts 5-phospho-alpha-D-ribose 1-diphosphate.

This sequence belongs to the UPRTase family. The cofactor is Mg(2+).

The catalysed reaction is UMP + diphosphate = 5-phospho-alpha-D-ribose 1-diphosphate + uracil. It functions in the pathway pyrimidine metabolism; UMP biosynthesis via salvage pathway; UMP from uracil: step 1/1. With respect to regulation, allosterically activated by GTP. In terms of biological role, catalyzes the conversion of uracil and 5-phospho-alpha-D-ribose 1-diphosphate (PRPP) to UMP and diphosphate. This chain is Uracil phosphoribosyltransferase, found in Pseudomonas entomophila (strain L48).